A 374-amino-acid chain; its full sequence is MMSQNYYQILGVSKTASQADLKKAYLKLAKQYHPDTTDAKDAEKKFKEINAAYDVLKDEQKRAAYDRLGHDAFQNQQSRGGGGNHGGFHPDINDIFGDFFSDFMGGSRRSSRPTSAKVRGSDLKYNLTINLEEAFHGIEKNISFSSAVKCDTCHGSGSEKGETVTTCDACSGVGVTRMQQGFFTIEQACHKCQGNGHIIKKPCKKCHGMGRYHKQRNLSVNIPAGVENGTRIRHTGEGEAGIRGGNSGDLYVDIAIKPHDIYKVDGAHLHCKLPISFVNAALGGEIEVPVIEGGKVKLTIPAGTQNGDQLRLRNKGMSKMRSTIRGDMLTHMHVEVPKNLSKRQRELLEEFKKESINEKENDGSFFNKMKSLWS.

Residues 5–69 (NYYQILGVSK…QKRAAYDRLG (65 aa)) enclose the J domain. Residues 137–215 (GIEKNISFSS…CHGMGRYHKQ (79 aa)) form a CR-type zinc finger. Zn(2+)-binding residues include C150, C153, C167, C170, C189, C192, C203, and C206. 4 CXXCXGXG motif repeats span residues 150–157 (CDTCHGSG), 167–174 (CDACSGVG), 189–196 (CHKCQGNG), and 203–210 (CKKCHGMG).

This sequence belongs to the DnaJ family. Homodimer. Zn(2+) serves as cofactor.

The protein resides in the cytoplasm. Functionally, participates actively in the response to hyperosmotic and heat shock by preventing the aggregation of stress-denatured proteins and by disaggregating proteins, also in an autonomous, DnaK-independent fashion. Unfolded proteins bind initially to DnaJ; upon interaction with the DnaJ-bound protein, DnaK hydrolyzes its bound ATP, resulting in the formation of a stable complex. GrpE releases ADP from DnaK; ATP binding to DnaK triggers the release of the substrate protein, thus completing the reaction cycle. Several rounds of ATP-dependent interactions between DnaJ, DnaK and GrpE are required for fully efficient folding. Also involved, together with DnaK and GrpE, in the DNA replication of plasmids through activation of initiation proteins. The sequence is that of Chaperone protein DnaJ from Rickettsia massiliae (strain Mtu5).